A 214-amino-acid polypeptide reads, in one-letter code: Thymidylate kinase (214 aa).

10–17 (GGEGAGKS) is an ATP binding site.

Belongs to the thymidylate kinase family.

It catalyses the reaction dTMP + ATP = dTDP + ADP. In terms of biological role, phosphorylation of dTMP to form dTDP in both de novo and salvage pathways of dTTP synthesis. The protein is Thymidylate kinase of Brucella abortus (strain S19).